Consider the following 281-residue polypeptide: 3-methyl-2-oxobutanoate hydroxymethyltransferase (281 aa).

Residues 1–20 (MSEQTIYGANTPGGSGPRTK) form a disordered region. Residues Asp-62 and Asp-101 each contribute to the Mg(2+) site. 3-methyl-2-oxobutanoate-binding positions include 62–63 (DS), Asp-101, and Lys-131. Glu-133 lines the Mg(2+) pocket. Glu-199 serves as the catalytic Proton acceptor.

Belongs to the PanB family. In terms of assembly, homodecamer; pentamer of dimers. Requires Mg(2+) as cofactor.

The protein localises to the cytoplasm. It carries out the reaction 3-methyl-2-oxobutanoate + (6R)-5,10-methylene-5,6,7,8-tetrahydrofolate + H2O = 2-dehydropantoate + (6S)-5,6,7,8-tetrahydrofolate. The protein operates within cofactor biosynthesis; (R)-pantothenate biosynthesis; (R)-pantoate from 3-methyl-2-oxobutanoate: step 1/2. Functionally, catalyzes the reversible reaction in which hydroxymethyl group from 5,10-methylenetetrahydrofolate is transferred onto alpha-ketoisovalerate to form ketopantoate. The polypeptide is 3-methyl-2-oxobutanoate hydroxymethyltransferase (Mycobacterium bovis (strain ATCC BAA-935 / AF2122/97)).